Here is a 126-residue protein sequence, read N- to C-terminus: Small ribosomal subunit protein uS8 (126 aa).

It belongs to the universal ribosomal protein uS8 family. As to quaternary structure, part of the 30S ribosomal subunit. Contacts proteins S5 and S12.

Functionally, one of the primary rRNA binding proteins, it binds directly to 16S rRNA central domain where it helps coordinate assembly of the platform of the 30S subunit. This Lawsonia intracellularis (strain PHE/MN1-00) protein is Small ribosomal subunit protein uS8.